We begin with the raw amino-acid sequence, 250 residues long: tRNA (guanine-N(1)-)-methyltransferase (250 aa).

S-adenosyl-L-methionine contacts are provided by residues G116 and 136 to 141 (IGDYVL).

This sequence belongs to the RNA methyltransferase TrmD family. In terms of assembly, homodimer.

It localises to the cytoplasm. It catalyses the reaction guanosine(37) in tRNA + S-adenosyl-L-methionine = N(1)-methylguanosine(37) in tRNA + S-adenosyl-L-homocysteine + H(+). Specifically methylates guanosine-37 in various tRNAs. This is tRNA (guanine-N(1)-)-methyltransferase from Pseudomonas putida (strain GB-1).